Consider the following 693-residue polypeptide: Elongation factor G (693 aa).

The 275-residue stretch at 8 to 282 (EKTRNIGIMA…AVIDYLPSPL (275 aa)) folds into the tr-type G domain. Residues 17 to 24 (AHVDAGKT), 81 to 85 (DTPGH), and 135 to 138 (NKMD) contribute to the GTP site.

This sequence belongs to the TRAFAC class translation factor GTPase superfamily. Classic translation factor GTPase family. EF-G/EF-2 subfamily.

The protein resides in the cytoplasm. Catalyzes the GTP-dependent ribosomal translocation step during translation elongation. During this step, the ribosome changes from the pre-translocational (PRE) to the post-translocational (POST) state as the newly formed A-site-bound peptidyl-tRNA and P-site-bound deacylated tRNA move to the P and E sites, respectively. Catalyzes the coordinated movement of the two tRNA molecules, the mRNA and conformational changes in the ribosome. The sequence is that of Elongation factor G from Streptococcus gordonii (strain Challis / ATCC 35105 / BCRC 15272 / CH1 / DL1 / V288).